We begin with the raw amino-acid sequence, 567 residues long: MSMFCYQCQETAGCKGCTVKGVCGKDESVAKAQDLLIYVTKGLAVVSNEGMKVGVKDSKVNKYIVENLFTTITNANFDRDSILDRVRETLRIREDLKAKVVKAGGKVGEVKVSGGFFKKLFGIAKEEMVGPDAATWTADNVIEFDAKAEKVGVLSTENEDIRSLRELITYGLKGLSAYMKHAMNLKYDDETVHEFMAKALAATLDDSLSVDQLVALALEAGKFGVNGMALLDKANTETYGNPEITTVDIGVRKNPGILISGHDLRDLEMLLEQTEGTGVDVYTHGEMLAGQYYPKFKKYKNFAGNYGNAWWKQKEEFEKFNGPIVMTTNCIVIPKASYKNRLFTTGATGMPGCPHIEAKADGTKDFSEVIKMAKKCSAPTEIEKGQIVGGFAHNQVIALADKVVAAVKSGAIKRFFVMAGCDGRANSRNYYTEFAEKLPKDTVILTAGCAKYKYNKLNLGDIGGIPRVLDAGQCNDSYSLVVIALKLQEVFRLKSVNELPISYNIAWYEQKAVIVLLSLLHLGVKNIHLGPTLPAFLSPNVAKVLVDNFGIGGITNVEDDMKMFMQG.

Residues cysteine 5, cysteine 8, cysteine 17, and cysteine 23 each coordinate [4Fe-4S] cluster. Hybrid [4Fe-2O-2S] cluster contacts are provided by histidine 262, glutamate 286, cysteine 330, cysteine 421, cysteine 449, cysteine 474, glutamate 509, and lysine 511. Cysteine 421 bears the Cysteine persulfide mark.

It belongs to the HCP family. [4Fe-4S] cluster is required as a cofactor. Requires hybrid [4Fe-2O-2S] cluster as cofactor.

Its subcellular location is the cytoplasm. It carries out the reaction A + NH4(+) + H2O = hydroxylamine + AH2 + H(+). Its function is as follows. Catalyzes the reduction of hydroxylamine to form NH(3) and H(2)O. In Clostridium acetobutylicum (strain ATCC 824 / DSM 792 / JCM 1419 / IAM 19013 / LMG 5710 / NBRC 13948 / NRRL B-527 / VKM B-1787 / 2291 / W), this protein is Hydroxylamine reductase 2.